Here is a 695-residue protein sequence, read N- to C-terminus: Eukaryotic translation initiation factor 3 subunit B (695 aa).

Positions 1 to 10 (MAKKKGDEKA) are enriched in basic and acidic residues. The disordered stretch occupies residues 1 to 43 (MAKKKGDEKANPAPQSDNEEQNFEEEPDFDDPEDFVEIPEEEL). Positions 17 to 43 (DNEEQNFEEEPDFDDPEDFVEIPEEEL) are enriched in acidic residues. An RRM domain is found at 60–144 (NVVVVDGCPQ…HTFLVNLFTD (85 aa)). 4 WD repeats span residues 164 to 205 (KVQS…PLLL), 295 to 335 (PPDE…LLDK), 338 to 373 (IKIP…TLLE), and 444 to 486 (EIKE…APTL).

Belongs to the eIF-3 subunit B family. Component of the eukaryotic translation initiation factor 3 (eIF-3) complex.

Its subcellular location is the cytoplasm. In terms of biological role, RNA-binding component of the eukaryotic translation initiation factor 3 (eIF-3) complex, which is involved in protein synthesis of a specialized repertoire of mRNAs and, together with other initiation factors, stimulates binding of mRNA and methionyl-tRNAi to the 40S ribosome. The eIF-3 complex specifically targets and initiates translation of a subset of mRNAs involved in cell proliferation. In Bombyx mori (Silk moth), this protein is Eukaryotic translation initiation factor 3 subunit B.